Consider the following 458-residue polypeptide: Phosphoglucosamine mutase (458 aa).

S100 functions as the Phosphoserine intermediate in the catalytic mechanism. S100, D239, D241, and D243 together coordinate Mg(2+). Phosphoserine is present on S100.

Belongs to the phosphohexose mutase family. Requires Mg(2+) as cofactor. In terms of processing, activated by phosphorylation.

The enzyme catalyses alpha-D-glucosamine 1-phosphate = D-glucosamine 6-phosphate. Catalyzes the conversion of glucosamine-6-phosphate to glucosamine-1-phosphate. The sequence is that of Phosphoglucosamine mutase from Dictyoglomus thermophilum (strain ATCC 35947 / DSM 3960 / H-6-12).